A 265-amino-acid polypeptide reads, in one-letter code: Eukaryotic translation initiation factor 3 subunit J (265 aa).

2 disordered regions span residues 1–113 (MPPS…DSDL) and 215–237 (SNEK…AAKT). A compositionally biased stretch (acidic residues) spans 27–45 (DEEDGDVLDSWDAADDSEV). Positions 43-95 (SEVEREKAAKAAEAKAKAEAEAAANKKSKAQRIAEHKTRRKAAEDEEDDESDE) form a coiled coil. The span at 46 to 62 (EREKAAKAAEAKAKAEA) shows a compositional bias: basic and acidic residues. Positions 86–97 (EDEEDDESDEDE) are enriched in acidic residues. 2 stretches are compositionally biased toward basic and acidic residues: residues 98–113 (AEKR…DSDL) and 217–229 (EKMK…DKGS).

Belongs to the eIF-3 subunit J family. In terms of assembly, component of the eukaryotic translation initiation factor 3 (eIF-3) complex.

Its subcellular location is the cytoplasm. In terms of biological role, component of the eukaryotic translation initiation factor 3 (eIF-3) complex, which is involved in protein synthesis of a specialized repertoire of mRNAs and, together with other initiation factors, stimulates binding of mRNA and methionyl-tRNAi to the 40S ribosome. The eIF-3 complex specifically targets and initiates translation of a subset of mRNAs involved in cell proliferation. The chain is Eukaryotic translation initiation factor 3 subunit J (hcr1) from Emericella nidulans (strain FGSC A4 / ATCC 38163 / CBS 112.46 / NRRL 194 / M139) (Aspergillus nidulans).